A 154-amino-acid chain; its full sequence is Methylglyoxal synthase (154 aa).

An MGS-like domain is found at 1–154 (MELTTRTIAA…RYMQQRLDLK (154 aa)). Substrate contacts are provided by residues histidine 19, lysine 23, 45-48 (TGTT), and 65-66 (SG). Aspartate 71 serves as the catalytic Proton donor/acceptor. Histidine 98 lines the substrate pocket.

The protein belongs to the methylglyoxal synthase family.

The enzyme catalyses dihydroxyacetone phosphate = methylglyoxal + phosphate. Catalyzes the formation of methylglyoxal from dihydroxyacetone phosphate. The protein is Methylglyoxal synthase of Yersinia pseudotuberculosis serotype O:1b (strain IP 31758).